The following is a 417-amino-acid chain: MQPRRPDRFDGLEYRGTSWGRGEGDPPPYQSSFPARSFSSSGDLSQHWVTTPPDIPGSRNLHWGDKSPQYGGADSNAGPPAFGEENSNSANSGEQLNRFAGFGIGLASLFTENVLAHPCIVLRRQCQVNYHARNYQLSPFNIVNIMYNFTKTQGLRALWKGMGSTFIVQGISLGAEGILSEFTHLPRELNHKWNPKQIGGHLLLKGLVYVIVTPFYSASLIETVQSEIIHDNPGILDCLKEGMGRVLNLGVPYSKRLLPLLVLTFPTVLHGILHYIVSSTVQKCVLFFIKKKSPPRLPADGSNTVQNKLEDYFPELIANFAASLCADVLLYPLETVLHRLHIQGTRTIIDNTDLGHEVVPINTQYEGLKDCINTIKREEGGLGFYKGFGAVVVQYTLHAIVLQITKIIYSSVVQTSS.

A compositionally biased stretch (basic and acidic residues) spans 1 to 13; it reads MQPRRPDRFDGLE. Residues 1 to 90 form a disordered region; it reads MQPRRPDRFD…AFGEENSNSA (90 aa). A compositionally biased stretch (low complexity) spans 31-41; that stretch reads SSFPARSFSSS. A Solcar 1 repeat occupies 95-186; sequence QLNRFAGFGI…GILSEFTHLP (92 aa). Helical transmembrane passes span 102–122, 162–182, 198–218, 257–277, 313–333, and 382–402; these read FGIGLASLFTENVLAHPCIVL, MGSTFIVQGISLGAEGILSEF, IGGHLLLKGLVYVIVTPFYSA, LLPLLVLTFPTVLHGILHYIV, FPELIANFAASLCADVLLYPL, and LGFYKGFGAVVVQYTLHAIVL. The stretch at 310–415 is one Solcar 2 repeat; sequence EDYFPELIAN…KIIYSSVVQT (106 aa).

It belongs to the mitochondrial carrier (TC 2.A.29) family.

Its subcellular location is the mitochondrion outer membrane. Functionally, may play a role in mitochondrial dynamics by controlling mitochondrial membrane fission. This Xenopus laevis (African clawed frog) protein is Solute carrier family 25 member 46-A (slc25a46-a).